The sequence spans 188 residues: Probable chorismate pyruvate-lyase (188 aa).

3 residues coordinate substrate: Arg-77, Leu-115, and Glu-174.

This sequence belongs to the UbiC family.

Its subcellular location is the cytoplasm. The catalysed reaction is chorismate = 4-hydroxybenzoate + pyruvate. Its pathway is cofactor biosynthesis; ubiquinone biosynthesis. In terms of biological role, removes the pyruvyl group from chorismate, with concomitant aromatization of the ring, to provide 4-hydroxybenzoate (4HB) for the ubiquinone pathway. This is Probable chorismate pyruvate-lyase from Shewanella loihica (strain ATCC BAA-1088 / PV-4).